A 190-amino-acid chain; its full sequence is Peptidyl-tRNA hydrolase (190 aa).

Residue phenylalanine 14 participates in tRNA binding. Residue histidine 19 is the Proton acceptor of the active site. Residues methionine 64, asparagine 66, and asparagine 112 each contribute to the tRNA site.

The protein belongs to the PTH family. As to quaternary structure, monomer.

It is found in the cytoplasm. The enzyme catalyses an N-acyl-L-alpha-aminoacyl-tRNA + H2O = an N-acyl-L-amino acid + a tRNA + H(+). Its function is as follows. Hydrolyzes ribosome-free peptidyl-tRNAs (with 1 or more amino acids incorporated), which drop off the ribosome during protein synthesis, or as a result of ribosome stalling. Functionally, catalyzes the release of premature peptidyl moieties from peptidyl-tRNA molecules trapped in stalled 50S ribosomal subunits, and thus maintains levels of free tRNAs and 50S ribosomes. In Staphylococcus aureus (strain Mu3 / ATCC 700698), this protein is Peptidyl-tRNA hydrolase.